The chain runs to 835 residues: Leucine--tRNA ligase (835 aa).

The 'HIGH' region signature appears at 42–52; it reads PYPSGRIHMGH. A 'KMSKS' region motif is present at residues 612 to 616; that stretch reads KMSKS. Lysine 615 serves as a coordination point for ATP.

The protein belongs to the class-I aminoacyl-tRNA synthetase family.

The protein resides in the cytoplasm. It catalyses the reaction tRNA(Leu) + L-leucine + ATP = L-leucyl-tRNA(Leu) + AMP + diphosphate. The protein is Leucine--tRNA ligase of Rhizorhabdus wittichii (strain DSM 6014 / CCUG 31198 / JCM 15750 / NBRC 105917 / EY 4224 / RW1) (Sphingomonas wittichii).